Consider the following 270-residue polypeptide: Ribosomal RNA small subunit methyltransferase A (270 aa).

Residues asparagine 18, leucine 20, glycine 45, glutamate 66, aspartate 91, and asparagine 112 each coordinate S-adenosyl-L-methionine.

The protein belongs to the class I-like SAM-binding methyltransferase superfamily. rRNA adenine N(6)-methyltransferase family. RsmA subfamily.

Its subcellular location is the cytoplasm. The enzyme catalyses adenosine(1518)/adenosine(1519) in 16S rRNA + 4 S-adenosyl-L-methionine = N(6)-dimethyladenosine(1518)/N(6)-dimethyladenosine(1519) in 16S rRNA + 4 S-adenosyl-L-homocysteine + 4 H(+). Functionally, specifically dimethylates two adjacent adenosines (A1518 and A1519) in the loop of a conserved hairpin near the 3'-end of 16S rRNA in the 30S particle. May play a critical role in biogenesis of 30S subunits. This is Ribosomal RNA small subunit methyltransferase A from Psychromonas ingrahamii (strain DSM 17664 / CCUG 51855 / 37).